The following is a 599-amino-acid chain: Matrix metallopeptidase-21 (599 aa).

An N-terminal signal peptide occupies residues 1–20 (MLTVIRRIFIIQTFIFITAE). The propeptide occupies 21-170 (KIFHSRDHSD…NHEHQAPVRK (150 aa)). Cys130 serves as a coordination point for Zn(2+). Residues 141 to 170 (DVTGSNSTRNHIRTSTNTSHNHEHQAPVRK) are disordered. Residues 143–159 (TGSNSTRNHIRTSTNTS) show a composition bias toward polar residues. Position 309 (His309) interacts with Zn(2+). Glu310 is a catalytic residue. His313 and His319 together coordinate Zn(2+). Cys355 and Cys586 form a disulfide bridge. 4 Hemopexin repeats span residues 356–415 (TGRF…WHGL), 417–473 (SGGV…FPGV), 474–522 (SGPL…FPAI), and 529–585 (VRSL…WFDI). Asn398 is a glycosylation site (N-linked (GlcNAc...) asparagine).

The protein belongs to the peptidase M10A family. The precursor is cleaved by a furin endopeptidase.

Plays a specialized role in the generation of left-right asymmetry during embryogenesis. May act as a negative regulator of the NOTCH-signaling pathway. This chain is Matrix metallopeptidase-21, found in Danio rerio (Zebrafish).